The chain runs to 369 residues: Phospho-N-acetylmuramoyl-pentapeptide-transferase (369 aa).

10 helical membrane passes run Ala3–Ile23, Gly53–Trp73, Val81–Leu101, Trp118–Leu138, Phe162–Val182, Leu198–Phe218, Pro240–Trp260, Ile267–Leu287, Thr290–Leu310, and Phe347–Ile367.

Belongs to the glycosyltransferase 4 family. MraY subfamily. Requires Mg(2+) as cofactor.

Its subcellular location is the cell membrane. It carries out the reaction UDP-N-acetyl-alpha-D-muramoyl-L-alanyl-gamma-D-glutamyl-meso-2,6-diaminopimeloyl-D-alanyl-D-alanine + di-trans,octa-cis-undecaprenyl phosphate = di-trans,octa-cis-undecaprenyl diphospho-N-acetyl-alpha-D-muramoyl-L-alanyl-D-glutamyl-meso-2,6-diaminopimeloyl-D-alanyl-D-alanine + UMP. Its pathway is cell wall biogenesis; peptidoglycan biosynthesis. Functionally, catalyzes the initial step of the lipid cycle reactions in the biosynthesis of the cell wall peptidoglycan: transfers peptidoglycan precursor phospho-MurNAc-pentapeptide from UDP-MurNAc-pentapeptide onto the lipid carrier undecaprenyl phosphate, yielding undecaprenyl-pyrophosphoryl-MurNAc-pentapeptide, known as lipid I. In Clavibacter sepedonicus (Clavibacter michiganensis subsp. sepedonicus), this protein is Phospho-N-acetylmuramoyl-pentapeptide-transferase.